The sequence spans 284 residues: 4-hydroxy-3-methylbut-2-enyl diphosphate reductase (284 aa).

A [4Fe-4S] cluster-binding site is contributed by cysteine 12. 2 residues coordinate (2E)-4-hydroxy-3-methylbut-2-enyl diphosphate: histidine 40 and histidine 72. Dimethylallyl diphosphate contacts are provided by histidine 40 and histidine 72. The isopentenyl diphosphate site is built by histidine 40 and histidine 72. Cysteine 94 is a [4Fe-4S] cluster binding site. Histidine 122 contributes to the (2E)-4-hydroxy-3-methylbut-2-enyl diphosphate binding site. Histidine 122 is a binding site for dimethylallyl diphosphate. Position 122 (histidine 122) interacts with isopentenyl diphosphate. The Proton donor role is filled by glutamate 124. Threonine 161 is a (2E)-4-hydroxy-3-methylbut-2-enyl diphosphate binding site. Cysteine 193 lines the [4Fe-4S] cluster pocket. (2E)-4-hydroxy-3-methylbut-2-enyl diphosphate contacts are provided by serine 221, asparagine 223, and serine 264. Residues serine 221, asparagine 223, and serine 264 each contribute to the dimethylallyl diphosphate site. Residues serine 221, asparagine 223, and serine 264 each contribute to the isopentenyl diphosphate site.

This sequence belongs to the IspH family. The cofactor is [4Fe-4S] cluster.

The enzyme catalyses isopentenyl diphosphate + 2 oxidized [2Fe-2S]-[ferredoxin] + H2O = (2E)-4-hydroxy-3-methylbut-2-enyl diphosphate + 2 reduced [2Fe-2S]-[ferredoxin] + 2 H(+). It carries out the reaction dimethylallyl diphosphate + 2 oxidized [2Fe-2S]-[ferredoxin] + H2O = (2E)-4-hydroxy-3-methylbut-2-enyl diphosphate + 2 reduced [2Fe-2S]-[ferredoxin] + 2 H(+). Its pathway is isoprenoid biosynthesis; dimethylallyl diphosphate biosynthesis; dimethylallyl diphosphate from (2E)-4-hydroxy-3-methylbutenyl diphosphate: step 1/1. It functions in the pathway isoprenoid biosynthesis; isopentenyl diphosphate biosynthesis via DXP pathway; isopentenyl diphosphate from 1-deoxy-D-xylulose 5-phosphate: step 6/6. In terms of biological role, catalyzes the conversion of 1-hydroxy-2-methyl-2-(E)-butenyl 4-diphosphate (HMBPP) into a mixture of isopentenyl diphosphate (IPP) and dimethylallyl diphosphate (DMAPP). Acts in the terminal step of the DOXP/MEP pathway for isoprenoid precursor biosynthesis. This Dehalococcoides mccartyi (strain ATCC BAA-2266 / KCTC 15142 / 195) (Dehalococcoides ethenogenes (strain 195)) protein is 4-hydroxy-3-methylbut-2-enyl diphosphate reductase.